The primary structure comprises 201 residues: 3-isopropylmalate dehydratase small subunit (201 aa).

Belongs to the LeuD family. LeuD type 1 subfamily. Heterodimer of LeuC and LeuD.

It carries out the reaction (2R,3S)-3-isopropylmalate = (2S)-2-isopropylmalate. The protein operates within amino-acid biosynthesis; L-leucine biosynthesis; L-leucine from 3-methyl-2-oxobutanoate: step 2/4. Its function is as follows. Catalyzes the isomerization between 2-isopropylmalate and 3-isopropylmalate, via the formation of 2-isopropylmaleate. In Paramagnetospirillum magneticum (strain ATCC 700264 / AMB-1) (Magnetospirillum magneticum), this protein is 3-isopropylmalate dehydratase small subunit.